Reading from the N-terminus, the 256-residue chain is DNA repair protein RecO (256 aa).

It belongs to the RecO family.

Functionally, involved in DNA repair and RecF pathway recombination. The polypeptide is DNA repair protein RecO (Streptococcus pneumoniae (strain Hungary19A-6)).